The following is a 577-amino-acid chain: Arginine--tRNA ligase (577 aa).

Positions 122–132 (PNVAKEMHVGH) match the 'HIGH' region motif.

Belongs to the class-I aminoacyl-tRNA synthetase family. As to quaternary structure, monomer.

Its subcellular location is the cytoplasm. It carries out the reaction tRNA(Arg) + L-arginine + ATP = L-arginyl-tRNA(Arg) + AMP + diphosphate. The polypeptide is Arginine--tRNA ligase (Escherichia coli (strain ATCC 8739 / DSM 1576 / NBRC 3972 / NCIMB 8545 / WDCM 00012 / Crooks)).